Here is a 274-residue protein sequence, read N- to C-terminus: Methionine aminopeptidase B (274 aa).

Histidine 102 is a binding site for substrate. A divalent metal cation-binding residues include aspartate 120, aspartate 131, and histidine 194. Histidine 201 contributes to the substrate binding site. 2 residues coordinate a divalent metal cation: glutamate 227 and glutamate 258.

This sequence belongs to the peptidase M24A family. Methionine aminopeptidase type 1 subfamily. In terms of assembly, monomer. It depends on Co(2+) as a cofactor. Zn(2+) serves as cofactor. Mn(2+) is required as a cofactor. The cofactor is Fe(2+).

It carries out the reaction Release of N-terminal amino acids, preferentially methionine, from peptides and arylamides.. Functionally, removes the N-terminal methionine from nascent proteins. The N-terminal methionine is often cleaved when the second residue in the primary sequence is small and uncharged (Met-Ala-, Cys, Gly, Pro, Ser, Thr, or Val). Requires deformylation of the N(alpha)-formylated initiator methionine before it can be hydrolyzed. This is Methionine aminopeptidase B from Synechocystis sp. (strain ATCC 27184 / PCC 6803 / Kazusa).